We begin with the raw amino-acid sequence, 202 residues long: Glycerol-3-phosphate acyltransferase (202 aa).

6 consecutive transmembrane segments (helical) span residues 2-22 (MIIV…GFVI), 54-74 (FLVT…PLWL), 85-105 (FFTN…YPVY), 120-140 (VVLG…FIIL), 141-161 (KIFK…VIGS), and 162-182 (LIIQ…ILII).

Belongs to the PlsY family. As to quaternary structure, probably interacts with PlsX.

The protein localises to the cell membrane. It carries out the reaction an acyl phosphate + sn-glycerol 3-phosphate = a 1-acyl-sn-glycero-3-phosphate + phosphate. Its pathway is lipid metabolism; phospholipid metabolism. Its function is as follows. Catalyzes the transfer of an acyl group from acyl-phosphate (acyl-PO(4)) to glycerol-3-phosphate (G3P) to form lysophosphatidic acid (LPA). This enzyme utilizes acyl-phosphate as fatty acyl donor, but not acyl-CoA or acyl-ACP. This chain is Glycerol-3-phosphate acyltransferase, found in Staphylococcus aureus (strain bovine RF122 / ET3-1).